Consider the following 412-residue polypeptide: Pyruvate dehydrogenase E1 component subunit alpha, mitochondrial (412 aa).

His104, Tyr130, Arg131, Ala169, Gly177, Val179, Asp208, Gly209, Ala210, Asn237, and Tyr239 together coordinate pyruvate. Tyr130 and Arg131 together coordinate thiamine diphosphate. Residues Gly177, Val179, Asp208, Gly209, Ala210, and Asn237 each contribute to the thiamine diphosphate site. Residue Asp208 coordinates Mg(2+). Mg(2+) is bound by residues Asn237 and Tyr239. His304 lines the thiamine diphosphate pocket.

In terms of assembly, tetramer of 2 alpha and 2 beta subunits. Requires thiamine diphosphate as cofactor. Mg(2+) is required as a cofactor.

It localises to the mitochondrion matrix. It carries out the reaction N(6)-[(R)-lipoyl]-L-lysyl-[protein] + pyruvate + H(+) = N(6)-[(R)-S(8)-acetyldihydrolipoyl]-L-lysyl-[protein] + CO2. E1 activity is regulated by phosphorylation (inactivation) and dephosphorylation (activation) of the alpha subunit. Functionally, the pyruvate dehydrogenase complex catalyzes the overall conversion of pyruvate to acetyl-CoA and CO(2). It contains multiple copies of three enzymatic components: pyruvate dehydrogenase (E1), dihydrolipoamide acetyltransferase (E2) and lipoamide dehydrogenase (E3). The polypeptide is Pyruvate dehydrogenase E1 component subunit alpha, mitochondrial (PDA1) (Kluyveromyces lactis (strain ATCC 8585 / CBS 2359 / DSM 70799 / NBRC 1267 / NRRL Y-1140 / WM37) (Yeast)).